The primary structure comprises 388 residues: Chorismate synthase (388 aa).

2 residues coordinate NADP(+): Arg-39 and Arg-45. FMN contacts are provided by residues 130-132 (RSS), 251-252 (NA), Gly-296, 311-315 (KPIPT), and Arg-337.

The protein belongs to the chorismate synthase family. Homotetramer. Requires FMNH2 as cofactor.

The catalysed reaction is 5-O-(1-carboxyvinyl)-3-phosphoshikimate = chorismate + phosphate. It participates in metabolic intermediate biosynthesis; chorismate biosynthesis; chorismate from D-erythrose 4-phosphate and phosphoenolpyruvate: step 7/7. Catalyzes the anti-1,4-elimination of the C-3 phosphate and the C-6 proR hydrogen from 5-enolpyruvylshikimate-3-phosphate (EPSP) to yield chorismate, which is the branch point compound that serves as the starting substrate for the three terminal pathways of aromatic amino acid biosynthesis. This reaction introduces a second double bond into the aromatic ring system. In Streptococcus agalactiae serotype Ia (strain ATCC 27591 / A909 / CDC SS700), this protein is Chorismate synthase.